The following is a 470-amino-acid chain: MSAAKPTTLYDKIWNDHLVHEAEDGTCLLYIDRHLVHEVTSPQAFEGLRTAGRKVHSPEKTLAVVDHNVPTTDRSKPNPDPESAEQIAALAENARDFGVTYYNEHDKRQGVVHVIGPEQGFTLPGTTIVCGDSHTSTHGAFGALAHGIGTSEVEHVLATQTLIQKKAKNMRVTVDGDLPDGVTAKDIILAIIGEIGTAGGTGYVLEYAGDAIRALSMEGRMTVCNMSIEGGARAGLIAPDEKAYAYLKGRPMAPTGANWDAAMRYWDTLRSDEGAHFDHELRLDAAALPPIVTWGTSPEDVISITGRVPNPADIADEAKRLSKERALAYMGLTPGTRITDIKIDRMFIGSCTNGRIEDLRAAAKVAEGKTVNGNVSAMIVPGSGLVKEQAEAEGLDKIFVKAGFEWREPGCSMCLAMNPDKLAPEERCASTSNRNFEGRQGFKGRTHLVSPAMAAAAAIAGHFVDIREWR.

Cys351, Cys411, and Cys414 together coordinate [4Fe-4S] cluster.

Belongs to the aconitase/IPM isomerase family. LeuC type 1 subfamily. As to quaternary structure, heterodimer of LeuC and LeuD. The cofactor is [4Fe-4S] cluster.

It catalyses the reaction (2R,3S)-3-isopropylmalate = (2S)-2-isopropylmalate. It functions in the pathway amino-acid biosynthesis; L-leucine biosynthesis; L-leucine from 3-methyl-2-oxobutanoate: step 2/4. Functionally, catalyzes the isomerization between 2-isopropylmalate and 3-isopropylmalate, via the formation of 2-isopropylmaleate. In Rhodopseudomonas palustris (strain BisB5), this protein is 3-isopropylmalate dehydratase large subunit.